The chain runs to 122 residues: Sterile alpha motif domain-containing protein 13 (122 aa).

Positions 51 to 119 (WAVMDVVNYF…KPLQTKHLKN (69 aa)) constitute an SAM domain.

This Homo sapiens (Human) protein is Sterile alpha motif domain-containing protein 13 (SAMD13).